Consider the following 488-residue polypeptide: MSQSVESRTRIKSERYESGVIPYAKMGYWDADYVIKETDILALFRITPQPGVDPIEASAAIAGESSTATWTVVWTDLLTACDLYRAKAYRVDPVPNVADQYFAYIAYDIDLFEEGSIANLTASIIGNVFGFKAVKALRLEDMRMPVAYLKTFQGPATGLIVERERMDKFGRPFLGATVKPKLGLSGKNYGRVVYEGLKGGLDFLKDDENINSQPFMRWRERFLYSMEGVNKASASAGEIKGHYLNVTAATMEDMYERAEFSKEVGSIICMIDLVIGYTAIQSMAIWARKHDMILHLHRAGNSTYSRQKNHGMNFRVICKWMRMAGVDHIHAGTVVGKLEGDPLMIKGFYNTLLESETDINLPQGLFFAQNWASLRKVVPVASGGIHAGQMHQLLDYLGDDVVLQFGGGTIGHPDGIQAGATANRVALESMVMARNEGRNYVAEGPQILRDAAKTCGPLQTALDLWKDISFNYTSTDTADFVETPTANI.

Substrate-binding residues include N127 and T177. Catalysis depends on K179, which acts as the Proton acceptor. K181 is a binding site for substrate. Mg(2+) contacts are provided by K205, D207, and E208. K205 bears the N6-carboxylysine mark. H297 (proton acceptor) is an active-site residue. Substrate contacts are provided by R298, H330, and S382.

It belongs to the RuBisCO large chain family. Type I subfamily. In terms of assembly, heterohexadecamer of 8 large chains and 8 small chains. The cofactor is Mg(2+).

It is found in the plastid. Its subcellular location is the chloroplast. It carries out the reaction 2 (2R)-3-phosphoglycerate + 2 H(+) = D-ribulose 1,5-bisphosphate + CO2 + H2O. It catalyses the reaction D-ribulose 1,5-bisphosphate + O2 = 2-phosphoglycolate + (2R)-3-phosphoglycerate + 2 H(+). Functionally, ruBisCO catalyzes two reactions: the carboxylation of D-ribulose 1,5-bisphosphate, the primary event in carbon dioxide fixation, as well as the oxidative fragmentation of the pentose substrate in the photorespiration process. Both reactions occur simultaneously and in competition at the same active site. The sequence is that of Ribulose bisphosphate carboxylase large chain (rbcL) from Pyropia dentata (Red alga).